Consider the following 124-residue polypeptide: uncharacterized protein (124 aa).

A disordered region spans residues 1–65 (MAENSRYVRL…RPASSSNPDY (65 aa)). The span at 37-47 (LNSNDAESQQV) shows a compositional bias: polar residues.

This is an uncharacterized protein from Microplitis demolitor (Parasitoid wasp).